The chain runs to 428 residues: MAKTVAYFYDPDVGNFHYGTGHPMKPHRLSLTHSLVLHYGLYKKMIVFKPYQASQHDMCRFHSEDYIDFLQRVSPNNMQGFTKSLNAFNVGDDCPVFPGLFEFCSRYTGASLQGATQLNNKICDIAINWAGGLHHAKKFEASGFCYVNDIVIGILELLKYHPRVLYVDIDIHHGDGVQEAFYLTDRVMTVSFHKYGNYFFPGTGDMYEVGAESGRYYCLNVPLRDGIDDQSYRHLFQPVIKQVIDFYQPTCIVLQCGADSLGCDRLGCFNLSIRGHGECVQYVKSFNIPLLVLGGGGYTVRNVARCWTYETSLLVDETISEELPYSEYFEYFAPDFTLHPDVSTRIENQNSRQYLDQIRQTIFENLKMLNHAPSVQIHDVPSDILSYERTDEPDPEERGSEDNYSRPEASNEFYDGDHDNDKESDVEI.

The interval 3-316 is histone deacetylase; sequence KTVAYFYDPD…WTYETSLLVD (314 aa). 1D-myo-inositol 1,4,5,6-tetrakisphosphate-binding residues include histidine 17, glycine 21, and lysine 25. Histidine 135 is a catalytic residue. Positions 170, 172, and 259 each coordinate Zn(2+). Arginine 265 provides a ligand contact to 1D-myo-inositol 1,4,5,6-tetrakisphosphate. Basic and acidic residues-rich tracts occupy residues 386 to 405 and 415 to 428; these read SYER…DNYS and DGDH…DVEI. The interval 386 to 428 is disordered; the sequence is SYERTDEPDPEERGSEDNYSRPEASNEFYDGDHDNDKESDVEI.

The protein belongs to the histone deacetylase family. HD type 1 subfamily.

The protein localises to the nucleus. It is found in the chromosome. The protein resides in the cytoplasm. It localises to the cytosol. The enzyme catalyses N(6)-acetyl-L-lysyl-[histone] + H2O = L-lysyl-[histone] + acetate. The catalysed reaction is N(6)-acetyl-L-lysyl-[protein] + H2O = L-lysyl-[protein] + acetate. It carries out the reaction N(6)-(2E)-butenoyl-L-lysyl-[protein] + H2O = (2E)-2-butenoate + L-lysyl-[protein]. It catalyses the reaction N(6)-(2-hydroxyisobutanoyl)-L-lysyl-[protein] + H2O = 2-hydroxy-2-methylpropanoate + L-lysyl-[protein]. The enzyme catalyses N(6)-[(S)-lactoyl]-L-lysyl-[protein] + H2O = (S)-lactate + L-lysyl-[protein]. With respect to regulation, inositol tetraphosphate (1D-myo-inositol 1,4,5,6-tetrakisphosphate) promotes the histone deacetylase activity by acting as an intermolecular glue between hdac3 and N-Cor repressor complex components. Functionally, histone deacetylase that catalyzes the deacetylation of lysine residues on the N-terminal part of the core histones (H2A, H2B, H3 and H4), and some other non-histone substrates. Histone deacetylation gives a tag for epigenetic repression and plays an important role in transcriptional regulation, cell cycle progression and developmental events. Histone deacetylases act via the formation of large multiprotein complexes, such as N-Cor repressor complex, which activate the histone deacetylase activity. Participates in the BCL6 transcriptional repressor activity by deacetylating the H3 'Lys-27' (H3K27) on enhancer elements, antagonizing EP300 acetyltransferase activity and repressing proximal gene expression. Also functions as a deacetylase for non-histone targets. In addition to protein deacetylase activity, also acts as a protein-lysine deacylase by recognizing other acyl groups: catalyzes removal of (2E)-butenoyl (crotonyl), lactoyl (lactyl) and 2-hydroxyisobutanoyl (2-hydroxyisobutyryl) acyl groups from lysine residues, leading to protein decrotonylation, delactylation and de-2-hydroxyisobutyrylation, respectively. This is Histone deacetylase 3 (hdac3) from Xenopus tropicalis (Western clawed frog).